Consider the following 347-residue polypeptide: Phenylalanine--tRNA ligase alpha subunit (347 aa).

A Mg(2+)-binding site is contributed by Glu268.

The protein belongs to the class-II aminoacyl-tRNA synthetase family. Phe-tRNA synthetase alpha subunit type 1 subfamily. In terms of assembly, tetramer of two alpha and two beta subunits. Mg(2+) is required as a cofactor.

It localises to the cytoplasm. It carries out the reaction tRNA(Phe) + L-phenylalanine + ATP = L-phenylalanyl-tRNA(Phe) + AMP + diphosphate + H(+). In Leptothrix cholodnii (strain ATCC 51168 / LMG 8142 / SP-6) (Leptothrix discophora (strain SP-6)), this protein is Phenylalanine--tRNA ligase alpha subunit.